A 239-amino-acid polypeptide reads, in one-letter code: Ribonuclease 3 (239 aa).

An RNase III domain is found at 12 to 137 (RAKLESLIGH…LIAAIYLDGG (126 aa)). Glutamate 50 is a binding site for Mg(2+). Residue aspartate 54 is part of the active site. Residues aspartate 123 and glutamate 126 each contribute to the Mg(2+) site. Residue glutamate 126 is part of the active site. The 70-residue stretch at 162-231 (DAKTELQEWS…ATKMLEREGI (70 aa)) folds into the DRBM domain.

Belongs to the ribonuclease III family. As to quaternary structure, homodimer. Mg(2+) is required as a cofactor.

It localises to the cytoplasm. The catalysed reaction is Endonucleolytic cleavage to 5'-phosphomonoester.. Digests double-stranded RNA. Involved in the processing of primary rRNA transcript to yield the immediate precursors to the large and small rRNAs (23S and 16S). Processes some mRNAs, and tRNAs when they are encoded in the rRNA operon. Processes pre-crRNA and tracrRNA of type II CRISPR loci if present in the organism. The polypeptide is Ribonuclease 3 (Rhizobium etli (strain CIAT 652)).